The primary structure comprises 476 residues: Doublesex- and mab-3-related transcription factor 3 (476 aa).

Positions Cys-29–Arg-76 form a DNA-binding region, DM. Disordered stretches follow at residues Asp-89–Ala-130 and Gly-147–Cys-195. Low complexity predominate over residues Asp-102 to Gln-121. The span at Asp-165–Glu-174 shows a compositional bias: polar residues. Positions Phe-176–Ser-185 are enriched in basic and acidic residues. The 36-residue stretch at Arg-255–Val-290 folds into the DMA domain. Residues Asn-418–Arg-432 are compositionally biased toward polar residues. A disordered region spans residues Asn-418 to Ser-476.

The protein belongs to the DMRT family. Expressed in the ventral spinal cord, in a restrical population of neurons migrating ventrically in the developing spinal cord at 11.5 dpc.

The protein resides in the nucleus. Its function is as follows. Probable transcription factor that plays a role in configuring the spinal circuits controlling stride in vertebrates. Involved in neuronal specification within specific subdivision of spinal cord neurons and in the development of a coordinated locomotor network controlling limb movements. May regulate transcription during sexual development. The protein is Doublesex- and mab-3-related transcription factor 3 (Dmrt3) of Mus musculus (Mouse).